The primary structure comprises 1008 residues: Chitin synthase C (1008 aa).

Residues 1–160 (MIYEMMVMKR…GGRTIDPNNR (160 aa)) form a disordered region. Residues 10–19 (RSANSRAQNN) show a composition bias toward low complexity. Over residues 34–45 (ESPSRPVSSLGN) the composition is skewed to polar residues. A glycan (N-linked (GlcNAc...) asparagine) is linked at N312. 5 consecutive transmembrane segments (helical) span residues 642-662 (FMQL…FYFI), 682-702 (IFVI…IISM), 717-737 (IIVY…LVVI), 755-775 (LFVN…YASF), and 787-807 (SAAY…YAFC). N-linked (GlcNAc...) asparagine glycosylation occurs at N833. Helical transmembrane passes span 887–907 (MVSI…EVYG) and 910–930 (AGGT…LALI). Residue N961 is glycosylated (N-linked (GlcNAc...) asparagine).

This sequence belongs to the chitin synthase family. Class II subfamily.

The protein resides in the cell membrane. The catalysed reaction is [(1-&gt;4)-N-acetyl-beta-D-glucosaminyl](n) + UDP-N-acetyl-alpha-D-glucosamine = [(1-&gt;4)-N-acetyl-beta-D-glucosaminyl](n+1) + UDP + H(+). Its function is as follows. Polymerizes chitin, a structural polymer of the cell wall and septum, by transferring the sugar moiety of UDP-GlcNAc to the non-reducing end of the growing chitin polymer. Involved in cell wall integrity and mycelial morphology. Plays an important role in septal growth or maintenance. Acts as a positive regulator of conidiation, cellular responses to oxidative stresses, and the production of malic acid. Negatively regulates the citric acid production. This chain is Chitin synthase C, found in Aspergillus niger (strain ATCC MYA-4892 / CBS 513.88 / FGSC A1513).